The chain runs to 669 residues: DNA ligase (669 aa).

NAD(+) contacts are provided by residues 34–38, 83–84, and glutamate 114; these read DAEYD and SL. Lysine 116 functions as the N6-AMP-lysine intermediate in the catalytic mechanism. NAD(+)-binding residues include arginine 137, glutamate 171, lysine 287, and lysine 311. Zn(2+) contacts are provided by cysteine 405, cysteine 408, cysteine 423, and cysteine 428. The BRCT domain occupies 591 to 669; that stretch reads NVESYFAGKT…EERFLQELNK (79 aa).

Belongs to the NAD-dependent DNA ligase family. LigA subfamily. Mg(2+) serves as cofactor. It depends on Mn(2+) as a cofactor.

The enzyme catalyses NAD(+) + (deoxyribonucleotide)n-3'-hydroxyl + 5'-phospho-(deoxyribonucleotide)m = (deoxyribonucleotide)n+m + AMP + beta-nicotinamide D-nucleotide.. In terms of biological role, DNA ligase that catalyzes the formation of phosphodiester linkages between 5'-phosphoryl and 3'-hydroxyl groups in double-stranded DNA using NAD as a coenzyme and as the energy source for the reaction. It is essential for DNA replication and repair of damaged DNA. The chain is DNA ligase from Bacillus cereus (strain ZK / E33L).